A 234-amino-acid chain; its full sequence is Structural PPIase-like protein L605 (234 aa).

The 188-residue stretch at 18–205 (YMDIVLNNEI…PTFSIGKCGA (188 aa)) folds into the PPIase cyclophilin-type domain.

It belongs to the cyclophilin-type PPIase family. Homotrimer.

The protein resides in the virion. Its subcellular location is the host cytoplasm. This is Structural PPIase-like protein L605 from Acanthamoeba polyphaga mimivirus (APMV).